Reading from the N-terminus, the 297-residue chain is uncharacterized protein (297 aa).

Disordered stretches follow at residues 12 to 43 (QNNN…TNDN), 65 to 85 (VPNS…DKPI), 122 to 151 (KVST…TNET), and 265 to 297 (SRLS…DQNN). A compositionally biased stretch (polar residues) spans 65–79 (VPNSINVNTSSSGNK). The segment covering 122–135 (KVSTTTTTTSSTSK) has biased composition (low complexity). Residues 140–151 (QTITKPNKTNET) are compositionally biased toward polar residues. Positions 268–287 (SSNNNNNNNNNNNNNNNNSN) are enriched in low complexity.

This is an uncharacterized protein from Dictyostelium discoideum (Social amoeba).